A 203-amino-acid polypeptide reads, in one-letter code: UPF0301 protein Sde_3637 (203 aa).

The protein belongs to the UPF0301 (AlgH) family.

The chain is UPF0301 protein Sde_3637 from Saccharophagus degradans (strain 2-40 / ATCC 43961 / DSM 17024).